The sequence spans 411 residues: Protein-lysine 6-oxidase (411 aa).

Positions 1–21 are cleaved as a signal peptide; it reads MRFAWTVLFLGQLQFCPLLRC. A propeptide spans 22–162 (removed by BMP1); that stretch reads APQAPREPPA…PPSHVDRMVG (141 aa). Residues 60 to 168 form a disordered region; the sequence is PQRRRDSSAT…RMVGDDPYNP (109 aa). N-linked (GlcNAc...) asparagine glycans are attached at residues asparagine 91 and asparagine 138. Sulfotyrosine is present on tyrosine 181. The tract at residues 207-411 is lysyl-oxidase like; it reads PDLVPDPYYI…YASGCTISPY (205 aa). 5 cysteine pairs are disulfide-bonded: cysteine 232-cysteine 238, cysteine 285-cysteine 334, cysteine 318-cysteine 324, cysteine 345-cysteine 355, and cysteine 392-cysteine 406. Histidine 286, histidine 288, and histidine 290 together coordinate Cu cation. Positions 314–349 form a cross-link, lysine tyrosylquinone (Lys-Tyr); that stretch reads KASFCLEDTSCDYGYHRRFACTAHTQGLSPGCYDTY. At tyrosine 349 the chain carries 2',4',5'-topaquinone.

The protein belongs to the lysyl oxidase family. As to quaternary structure, interacts with MFAP4. Interacts (via propeptide) with EFEMP2; this interaction is strong and facilitates formation of ternary complexes with ELN during elastic fiber assembly; this interaction limits interaction of EFEMP2 with FBLN5. Requires Cu cation as cofactor. Lysine tyrosylquinone residue is required as a cofactor. The lysine tyrosylquinone cross-link (LTQ) is generated by condensation of the epsilon-amino group of a lysine with a topaquinone produced by oxidation of tyrosine. In terms of processing, proteolytically cleaved by BMP1 which removes the propeptide. Also proteolytically cleaved by ADAMTS2 and ADAMTS14, but not by ADAMTS3, at an additional cleavage site downstream of the BMP1 cleavage site. The propeptide plays a role in directing the deposition of this enzyme to elastic fibers, via interaction with tropoelastin. Cleavage by BMP1 to remove the propeptide does not increase enzymatic activity but increases binding to collagen. Cleavage by ADAMTS2 produces a form with reduced collagen-binding activity. Post-translationally, sulfated at Tyr-181 and also at either Tyr-177 or Tyr-178 which enhances binding to collagen. As to expression, aorta and lung.

It localises to the secreted. The protein resides in the extracellular space. The catalysed reaction is L-lysyl-[protein] + O2 + H2O = (S)-2-amino-6-oxohexanoyl-[protein] + H2O2 + NH4(+). Responsible for the post-translational oxidative deamination of peptidyl lysine residues in precursors to fibrous collagen and elastin. Regulator of Ras expression. May play a role in tumor suppression. Plays a role in the aortic wall architecture. The sequence is that of Protein-lysine 6-oxidase from Rattus norvegicus (Rat).